A 425-amino-acid chain; its full sequence is Glutamyl-tRNA reductase (425 aa).

Substrate contacts are provided by residues 49–52 (TCNR), serine 107, 112–114 (EPQ), and glutamine 118. Cysteine 50 serves as the catalytic Nucleophile. 187 to 192 (GAGETI) serves as a coordination point for NADP(+).

It belongs to the glutamyl-tRNA reductase family. As to quaternary structure, homodimer.

It catalyses the reaction (S)-4-amino-5-oxopentanoate + tRNA(Glu) + NADP(+) = L-glutamyl-tRNA(Glu) + NADPH + H(+). Its pathway is porphyrin-containing compound metabolism; protoporphyrin-IX biosynthesis; 5-aminolevulinate from L-glutamyl-tRNA(Glu): step 1/2. Catalyzes the NADPH-dependent reduction of glutamyl-tRNA(Glu) to glutamate 1-semialdehyde (GSA). The sequence is that of Glutamyl-tRNA reductase from Pseudomonas putida (strain ATCC 700007 / DSM 6899 / JCM 31910 / BCRC 17059 / LMG 24140 / F1).